The chain runs to 861 residues: Leucine--tRNA ligase (861 aa).

Positions 42–52 (PYPSGRIHMGH) match the 'HIGH' region motif. Positions 623–627 (KMSKS) match the 'KMSKS' region motif. ATP is bound at residue Lys-626.

It belongs to the class-I aminoacyl-tRNA synthetase family.

The protein resides in the cytoplasm. It catalyses the reaction tRNA(Leu) + L-leucine + ATP = L-leucyl-tRNA(Leu) + AMP + diphosphate. The sequence is that of Leucine--tRNA ligase from Caulobacter sp. (strain K31).